A 205-amino-acid polypeptide reads, in one-letter code: Large ribosomal subunit protein uL4 (205 aa).

This sequence belongs to the universal ribosomal protein uL4 family. In terms of assembly, part of the 50S ribosomal subunit. Contacts proteins L15 and L34.

One of the primary rRNA binding proteins, this protein initially binds near the 5'-end of the 23S rRNA. It is important during the early stages of 50S assembly. Its function is as follows. Makes multiple contacts with different domains of the 23S rRNA in the assembled 50S subunit. Functionally, this protein is located close to the polypeptide exit tunnel, and interacts with the modified macrolide azithromycin, which blocks the tunnel. This is Large ribosomal subunit protein uL4 (rplD) from Deinococcus radiodurans (strain ATCC 13939 / DSM 20539 / JCM 16871 / CCUG 27074 / LMG 4051 / NBRC 15346 / NCIMB 9279 / VKM B-1422 / R1).